The following is a 428-amino-acid chain: MSAFVVLGAQWGDEGKGKMTDYLAEEAEVVVRFQGGNNAGHTVEVEDKQYKLHLIPSGILHDEKLNVIGNGVVVDPKALFTEIDYLEGLGVKVTPEKLIVSDRAHLIMPYHITLDKLKEKARGKNDIGTTCKGIGPCYTDKYERSGIRVCDLMHKDSFAEKLRINIEMKNGYIKLLGGEELNFDEIYNEYMAFAERLRPYVKDTSVEIYNAIQADKNVLFEGAQGMLLDIDYGTYPYVTSSNTTSCGVASGAGIGPNMVTNAVGIAKAYTTRVGKGPFPTELENETGDWIREKGHEYGVTTGRSRRCGWLDLVILKTTTRVCGLTSLVVTKIDTLAGLDKIQMCVGYELDGKVIDYFPASLEDLARCKPVYEEFEGWGEEVADARSYEELPENAKTYLRRIEEFTGTKVSIVGVGPKRNQTIRVREEL.

GTP contacts are provided by residues 12–18 and 40–42; these read GDEGKGK and GHT. D13 serves as the catalytic Proton acceptor. 2 residues coordinate Mg(2+): D13 and G40. IMP contacts are provided by residues 13–16, 38–41, T130, R144, Q224, T239, and R303; these read DEGK and NAGH. H41 functions as the Proton donor in the catalytic mechanism. 299–305 lines the substrate pocket; sequence VTTGRSR. GTP is bound by residues R305, 331 to 333, and 413 to 415; these read KID and GVG.

It belongs to the adenylosuccinate synthetase family. In terms of assembly, homodimer. Mg(2+) serves as cofactor.

The protein localises to the cytoplasm. The enzyme catalyses IMP + L-aspartate + GTP = N(6)-(1,2-dicarboxyethyl)-AMP + GDP + phosphate + 2 H(+). It functions in the pathway purine metabolism; AMP biosynthesis via de novo pathway; AMP from IMP: step 1/2. Its function is as follows. Plays an important role in the de novo pathway of purine nucleotide biosynthesis. Catalyzes the first committed step in the biosynthesis of AMP from IMP. The polypeptide is Adenylosuccinate synthetase (Clostridium perfringens (strain 13 / Type A)).